We begin with the raw amino-acid sequence, 246 residues long: High mobility group protein 1 (246 aa).

Positions 106-179 form a DNA-binding region, HMG box; that stretch reads PKKPLTVFFA…NYQREKSKYL (74 aa). The segment at 179 to 246 is disordered; that stretch reads LEAKKNGTLP…KKKDKSNSSI (68 aa). Residues 214-227 are compositionally biased toward basic and acidic residues; it reads PVEKRPHDDDGSSE. Basic residues predominate over residues 228 to 238; sequence KKKKKKKKDKK.

In terms of assembly, interacts with FPR1. Interacts with an unidentified DNA helicase. Associates with rDNA.

It is found in the nucleus. The protein resides in the nucleolus. In terms of biological role, DNA-binding protein that is probably part of the rDNA transcription apparatus. Acts synergetically with the RPA49 subunit of RNA polymerase I during rDNA transcription. May participate in mutagenesis control. The protein is High mobility group protein 1 (HMO1) of Saccharomyces cerevisiae (strain ATCC 204508 / S288c) (Baker's yeast).